A 221-amino-acid chain; its full sequence is GTP cyclohydrolase III (221 aa).

This sequence belongs to the archaeal-type GTP cyclohydrolase family.

The catalysed reaction is GTP + 3 H2O = 2-amino-5-formylamino-6-(5-phospho-D-ribosylamino)pyrimidin-4(3H)-one + 2 phosphate + 2 H(+). Its function is as follows. Catalyzes the formation of 2-amino-5-formylamino-6-ribofuranosylamino-4(3H)-pyrimidinone ribonucleotide monophosphate and inorganic phosphate from GTP. Also has an independent pyrophosphate phosphohydrolase activity. The sequence is that of GTP cyclohydrolase III from Pyrobaculum arsenaticum (strain DSM 13514 / JCM 11321 / PZ6).